The following is a 671-amino-acid chain: MTDKYNDWVKNKKHNNYNMAEDPLYYIKSNWVIERQLSKGSFGQVYKAHKKLDPNFVCAIKVIQYCKFTMKEVDYLKKLNDPKFVKYYSLEFNNSKTYAYIIMEFIEGESMKSIIENKKFSDIEIKEIIKELLKALVYLNDKGIMHRDLKPENIMFQNQNQNQNQNNKINLKLIDFGLSKAINENIINKTVKLQTISSVGTTLYMAPEILLNNKGSNSSLDIWSLGCIIVEMKWGLNQLCLQRPNNIPVFPVNSLFTEILNLCFQTEPSKRIKSHQLIKHPFFNDENEQFYNDNKEYFDFLKENERDSYIEIHNTESIGSNSTCSINEIRFENLYLIQSTYENQYPIKTITLHEKYTGISKLSHLNSKFKIIYLFLILLFLMTILVNLNRHVQTKFSIIQRDNIFLSITPESNPIKKPSPTQSSDYNQYSEGSQSSYESSSSSESSSESSSSESSSSESSSSSESQSSEINYSSNSNDLQPTDSSTTDPPVTDPPITDPPITDPPVTDPPITEPPVTETPKPTINPFFNTPVFICSQKIDQCLTVLNSQDLEFIDKKGRDQSMVLEYDGNAEQTFSIREKGGMYICLSGEHYHFSEKLKGRLNANKDGRDCTFNLITQFNIDKQANLYSFRSPNDQYIQSDETTRFISTKPGGLGSQSQFFIYFSHSLGPN.

One can recognise a Protein kinase domain in the interval 31-283 (WVIERQLSKG…SHQLIKHPFF (253 aa)). Residues 37 to 45 (LSKGSFGQV) and lysine 61 contribute to the ATP site. Aspartate 148 (proton acceptor) is an active-site residue. Residues 369–389 (FKIIYLFLILLFLMTILVNLN) traverse the membrane as a helical segment. Residues 410–523 (PESNPIKKPS…PPVTETPKPT (114 aa)) form a disordered region. Residues 427 to 490 (NQYSEGSQSS…PTDSSTTDPP (64 aa)) show a composition bias toward low complexity. The segment covering 491–513 (VTDPPITDPPITDPPVTDPPITE) has biased composition (pro residues).

The protein belongs to the protein kinase superfamily. STE Ser/Thr protein kinase family. Mg(2+) is required as a cofactor.

The protein resides in the membrane. It carries out the reaction L-seryl-[protein] + ATP = O-phospho-L-seryl-[protein] + ADP + H(+). The catalysed reaction is L-threonyl-[protein] + ATP = O-phospho-L-threonyl-[protein] + ADP + H(+). The polypeptide is Probable serine/threonine-protein kinase DDB_G0286627 (Dictyostelium discoideum (Social amoeba)).